The sequence spans 349 residues: GDSL esterase/lipase At2g19050 (349 aa).

The first 23 residues, 1 to 23 (MAEAIFKALLLVIATTAFATTEA), serve as a signal peptide directing secretion. Ser38 functions as the Nucleophile in the catalytic mechanism. Asn49 is a glycosylation site (N-linked (GlcNAc...) asparagine). Active-site residues include Asp316 and His319.

The protein belongs to the 'GDSL' lipolytic enzyme family.

The protein resides in the secreted. This chain is GDSL esterase/lipase At2g19050, found in Arabidopsis thaliana (Mouse-ear cress).